A 181-amino-acid polypeptide reads, in one-letter code: Adenine phosphoribosyltransferase (181 aa).

It belongs to the purine/pyrimidine phosphoribosyltransferase family. As to quaternary structure, homodimer.

It is found in the cytoplasm. The enzyme catalyses AMP + diphosphate = 5-phospho-alpha-D-ribose 1-diphosphate + adenine. Its pathway is purine metabolism; AMP biosynthesis via salvage pathway; AMP from adenine: step 1/1. Its function is as follows. Catalyzes a salvage reaction resulting in the formation of AMP, that is energically less costly than de novo synthesis. The protein is Adenine phosphoribosyltransferase of Chelativorans sp. (strain BNC1).